The chain runs to 380 residues: Cytochrome b (380 aa).

4 helical membrane-spanning segments follow: residues 34–54 (FGSL…LLAM), 78–99 (WLIR…YLHI), 114–134 (WNTG…GYVL), and 179–199 (FFAL…IHLT). The heme b site is built by His-84 and His-98. His-183 and His-197 together coordinate heme b. His-202 contacts a ubiquinone. 4 helical membrane-spanning segments follow: residues 227-247 (TKDI…ALFS), 289-309 (LGGV…PLLH), 321-341 (LSQL…WIGS), and 348-368 (FIII…ILFP).

This sequence belongs to the cytochrome b family. In terms of assembly, the cytochrome bc1 complex contains 11 subunits: 3 respiratory subunits (MT-CYB, CYC1 and UQCRFS1), 2 core proteins (UQCRC1 and UQCRC2) and 6 low-molecular weight proteins (UQCRH/QCR6, UQCRB/QCR7, UQCRQ/QCR8, UQCR10/QCR9, UQCR11/QCR10 and a cleavage product of UQCRFS1). This cytochrome bc1 complex then forms a dimer. Requires heme b as cofactor.

It localises to the mitochondrion inner membrane. Functionally, component of the ubiquinol-cytochrome c reductase complex (complex III or cytochrome b-c1 complex) that is part of the mitochondrial respiratory chain. The b-c1 complex mediates electron transfer from ubiquinol to cytochrome c. Contributes to the generation of a proton gradient across the mitochondrial membrane that is then used for ATP synthesis. The protein is Cytochrome b (MT-CYB) of Pygoscelis antarcticus (Chinstrap penguin).